A 749-amino-acid polypeptide reads, in one-letter code: 5-methyltetrahydropteroyltriglutamate--homocysteine methyltransferase (749 aa).

5-methyltetrahydropteroyltri-L-glutamate contacts are provided by residues 15-18 (RELK) and lysine 114. L-homocysteine contacts are provided by residues 425–427 (IGS) and glutamate 478. Residues 425–427 (IGS) and glutamate 478 contribute to the L-methionine site. Tryptophan 555 is a binding site for 5-methyltetrahydropteroyltri-L-glutamate. Aspartate 593 provides a ligand contact to L-homocysteine. Residue aspartate 593 participates in L-methionine binding. Glutamate 599 lines the 5-methyltetrahydropteroyltri-L-glutamate pocket. Residues histidine 636, cysteine 638, and glutamate 660 each contribute to the Zn(2+) site. Catalysis depends on histidine 689, which acts as the Proton donor. Cysteine 721 serves as a coordination point for Zn(2+).

The protein belongs to the vitamin-B12 independent methionine synthase family. Zn(2+) is required as a cofactor.

It catalyses the reaction 5-methyltetrahydropteroyltri-L-glutamate + L-homocysteine = tetrahydropteroyltri-L-glutamate + L-methionine. It functions in the pathway amino-acid biosynthesis; L-methionine biosynthesis via de novo pathway; L-methionine from L-homocysteine (MetE route): step 1/1. Catalyzes the transfer of a methyl group from 5-methyltetrahydrofolate to homocysteine resulting in methionine formation. This chain is 5-methyltetrahydropteroyltriglutamate--homocysteine methyltransferase, found in Streptococcus pneumoniae serotype 19F (strain G54).